The following is a 369-amino-acid chain: Deoxyhypusine synthase (369 aa).

Residues 105 to 109 (SNLIS), 131 to 133 (TAG), E137, and D238 contribute to the NAD(+) site. Spermidine is bound at residue 136–137 (EE). D243 serves as a coordination point for spermidine. G283 serves as a coordination point for NAD(+). Position 288 (H288) interacts with spermidine. 308-309 (TA) lines the NAD(+) pocket. Residues 314-316 (GSD) and 323-329 (EAVSWGK) each bind spermidine. The active-site Nucleophile is K329. 342 to 343 (DA) is a binding site for NAD(+).

Belongs to the deoxyhypusine synthase family. It depends on NAD(+) as a cofactor.

It carries out the reaction [eIF5A protein]-L-lysine + spermidine = [eIF5A protein]-deoxyhypusine + propane-1,3-diamine. It functions in the pathway protein modification; eIF5A hypusination. Functionally, catalyzes the NAD-dependent oxidative cleavage of spermidine and the subsequent transfer of the butylamine moiety of spermidine to the epsilon-amino group of a critical lysine residue of the eIF-5A precursor protein to form the intermediate deoxyhypusine residue. This is the first step of the post-translational modification of that lysine into an unusual amino acid residue named hypusine. Hypusination is unique to mature eIF-5A factor and is essential for its function. This chain is Deoxyhypusine synthase (Dhps), found in Rattus norvegicus (Rat).